The chain runs to 316 residues: D-alanine--D-alanine ligase (316 aa).

The ATP-grasp domain maps to 112–310 (KTALKAHGLP…FGKLCRWLVE (199 aa)). 139–189 (MATPYVVKPNNEGSSVGVYLVNEAANGPPHLSDDMPDEVMVETYAPGRELT) serves as a coordination point for ATP. Mg(2+)-binding residues include D261, E277, and N279.

This sequence belongs to the D-alanine--D-alanine ligase family. Mg(2+) serves as cofactor. It depends on Mn(2+) as a cofactor.

Its subcellular location is the cytoplasm. The enzyme catalyses 2 D-alanine + ATP = D-alanyl-D-alanine + ADP + phosphate + H(+). It participates in cell wall biogenesis; peptidoglycan biosynthesis. Its function is as follows. Cell wall formation. This is D-alanine--D-alanine ligase from Jannaschia sp. (strain CCS1).